Consider the following 261-residue polypeptide: 5'-nucleotidase SurE (261 aa).

4 residues coordinate a divalent metal cation: D8, D9, S39, and N91.

Belongs to the SurE nucleotidase family. It depends on a divalent metal cation as a cofactor.

Its subcellular location is the cytoplasm. It catalyses the reaction a ribonucleoside 5'-phosphate + H2O = a ribonucleoside + phosphate. Nucleotidase that shows phosphatase activity on nucleoside 5'-monophosphates. This Polaromonas sp. (strain JS666 / ATCC BAA-500) protein is 5'-nucleotidase SurE.